The following is a 236-amino-acid chain: Sensory rhodopsin II (236 aa).

7 helical membrane passes run 4 to 24 (ITTWFTLGLLGELLGTAVLAY), 38 to 58 (LLLIAIPGIAIVAYALMALGF), 73 to 93 (YVDWLLTTPLNVWFLALLAGA), 101 to 121 (LVVLQALTIVFGFAGAVTPSP), 122 to 142 (VSYALFAVGGALFGGVIYLLY), 167 to 187 (FVVVLWLVYPVVWLLGAAGVG), and 196 to 216 (LVVVYLDVVTKVGFGVIALLA). Position 206 is an N6-(retinylidene)lysine (K206).

Belongs to the archaeal/bacterial/fungal opsin family. In terms of processing, the covalent binding of retinal to the apoprotein, bacterioopsin, generates bacteriorhodopsin.

It localises to the membrane. Functionally, mediates the photorepellent response. This Haloarcula marismortui (strain ATCC 43049 / DSM 3752 / JCM 8966 / VKM B-1809) (Halobacterium marismortui) protein is Sensory rhodopsin II (sop2).